A 577-amino-acid polypeptide reads, in one-letter code: Arginine--tRNA ligase (577 aa).

Positions 122-132 match the 'HIGH' region motif; the sequence is PNVAKEMHVGH.

The protein belongs to the class-I aminoacyl-tRNA synthetase family. Monomer.

The protein localises to the cytoplasm. The enzyme catalyses tRNA(Arg) + L-arginine + ATP = L-arginyl-tRNA(Arg) + AMP + diphosphate. The polypeptide is Arginine--tRNA ligase (Salmonella newport (strain SL254)).